Consider the following 496-residue polypeptide: Bifunctional protein HldE (496 aa).

The segment at 1–331 (MDPTPALAEI…AAVHQEEVSA (331 aa)) is ribokinase. Position 206 to 209 (206 to 209 (NRKE)) interacts with ATP. D276 is an active-site residue. The segment at 358–496 (FTNGCFDLLH…GGSRRSGDTL (139 aa)) is cytidylyltransferase.

The protein in the N-terminal section; belongs to the carbohydrate kinase PfkB family. In the C-terminal section; belongs to the cytidylyltransferase family. As to quaternary structure, homodimer.

The enzyme catalyses D-glycero-beta-D-manno-heptose 7-phosphate + ATP = D-glycero-beta-D-manno-heptose 1,7-bisphosphate + ADP + H(+). It catalyses the reaction D-glycero-beta-D-manno-heptose 1-phosphate + ATP + H(+) = ADP-D-glycero-beta-D-manno-heptose + diphosphate. It functions in the pathway nucleotide-sugar biosynthesis; ADP-L-glycero-beta-D-manno-heptose biosynthesis; ADP-L-glycero-beta-D-manno-heptose from D-glycero-beta-D-manno-heptose 7-phosphate: step 1/4. Its pathway is nucleotide-sugar biosynthesis; ADP-L-glycero-beta-D-manno-heptose biosynthesis; ADP-L-glycero-beta-D-manno-heptose from D-glycero-beta-D-manno-heptose 7-phosphate: step 3/4. Catalyzes the phosphorylation of D-glycero-D-manno-heptose 7-phosphate at the C-1 position to selectively form D-glycero-beta-D-manno-heptose-1,7-bisphosphate. Functionally, catalyzes the ADP transfer from ATP to D-glycero-beta-D-manno-heptose 1-phosphate, yielding ADP-D-glycero-beta-D-manno-heptose. The chain is Bifunctional protein HldE from Rhodospirillum rubrum (strain ATCC 11170 / ATH 1.1.1 / DSM 467 / LMG 4362 / NCIMB 8255 / S1).